The following is a 194-amino-acid chain: tRNA (guanosine(18)-2'-O)-methyltransferase (194 aa).

S-adenosyl-L-methionine contacts are provided by residues threonine 99, 122–126, isoleucine 142, and leucine 151; that span reads GAEKW.

This sequence belongs to the class IV-like SAM-binding methyltransferase superfamily. RNA methyltransferase TrmH family. In terms of assembly, monomer.

It carries out the reaction guanosine(18) in tRNA + S-adenosyl-L-methionine = 2'-O-methylguanosine(18) in tRNA + S-adenosyl-L-homocysteine + H(+). Its activity is regulated as follows. Stimulated by magnesium ions and spermine. Inhibited by S-adenosyl-homocysteine. Functionally, catalyzes the 2'-O methylation of guanosine at position 18 in tRNA. The chain is tRNA (guanosine(18)-2'-O)-methyltransferase from Thermus thermophilus (strain ATCC BAA-163 / DSM 7039 / HB27).